The primary structure comprises 733 residues: Exosome complex exonuclease RRP6 (733 aa).

Ser-138 carries the post-translational modification Phosphoserine. The 3'-5' exonuclease domain maps to 214–380 (IWVDTSTELE…NIYDQLRNKL (167 aa)). Mn(2+) is bound by residues Asp-238 and Glu-240. Zn(2+) contacts are provided by Asp-238 and Glu-240. 2 residues coordinate AMP: Glu-240 and His-241. 2 residues coordinate UMP: Glu-240 and His-241. Asp-296 contacts Mn(2+). Residues Trp-299, Lys-342, and Gln-345 each coordinate AMP. UMP is bound by residues Trp-299, Lys-342, and Gln-345. Asp-365 contacts Mn(2+). Asp-365 is a binding site for Zn(2+). One can recognise an HRDC domain in the interval 435–515 (PPEREVLVRE…RDALRNIKNT (81 aa)). Thr-520 carries the post-translational modification Phosphothreonine. 2 positions are modified to phosphoserine: Ser-640 and Ser-645. Residues 662–733 (IQKKQPAKEK…AKGKNLSFKR (72 aa)) form a disordered region. Basic and acidic residues predominate over residues 667–680 (PAKEKGVTEKDAVD). The span at 687-697 (ILSNKPGQNNR) shows a compositional bias: polar residues. 2 consecutive short sequence motifs (nuclear localization signal) follow at residues 700–704 (KKRRF) and 718–721 (KKRR). A compositionally biased stretch (basic residues) spans 716–733 (AAKKRRPAAKGKNLSFKR).

This sequence belongs to the exosome component 10/RRP6 family. In terms of assembly, component of the RNA exosome complex. Specifically part of the catalytically inactive RNA exosome core complex (Exo-9) which may associate with the catalytic subunits RRP6 and DIS3 in cytoplasmic- and nuclear-specific RNA exosome complex forms. Exo-9 is formed by a hexameric base ring of RNase PH domain-containing subunits and a cap ring consisting of CSL4, RRP4 and RRP40. RRP6 specifically is part of the nuclear form of the RNA exosome complex; the association appears to be mediated by Exo-9 and not by DIS3. Interacts with LRP1. Interacts with NPL3, NOP53 and PAP1.

The protein resides in the nucleus. It is found in the nucleolus. Functionally, nuclear-specific catalytic component of the RNA exosome complex which has 3'-&gt;5' exoribonuclease activity and participates in a multitude of cellular RNA processing and degradation events. In the nucleus, the RNA exosome complex is involved in proper maturation of stable RNA species such as rRNA, snRNA and snoRNA, in the elimination of RNA processing by-products and non-coding 'pervasive' transcripts, such as antisense RNA species and cryptic unstable transcripts (CUTs), and of mRNAs with processing defects, thereby limiting or excluding their export to the cytoplasm. The catalytic inactive RNA exosome core complex of 9 subunits (Exo-9) is proposed to play a pivotal role in the binding and presentation of RNA for ribonucleolysis, and to serve as a scaffold for the association with catalytic subunits and accessory proteins or complexes. RRP6 has 3'-5' exonuclease activity which is not modulated upon association with Exo-9 suggesting that the complex inner RNA-binding path is not used to access its active site. The polypeptide is Exosome complex exonuclease RRP6 (RRP6) (Saccharomyces cerevisiae (strain ATCC 204508 / S288c) (Baker's yeast)).